Here is a 182-residue protein sequence, read N- to C-terminus: Glutathione-regulated potassium-efflux system ancillary protein KefG (182 aa).

This sequence belongs to the NAD(P)H dehydrogenase (quinone) family. KefG subfamily. In terms of assembly, interacts with KefB.

It localises to the cell inner membrane. The catalysed reaction is a quinone + NADH + H(+) = a quinol + NAD(+). The enzyme catalyses a quinone + NADPH + H(+) = a quinol + NADP(+). In terms of biological role, regulatory subunit of a potassium efflux system that confers protection against electrophiles. Required for full activity of KefB. The polypeptide is Glutathione-regulated potassium-efflux system ancillary protein KefG (Yersinia pseudotuberculosis serotype O:1b (strain IP 31758)).